Here is a 52-residue protein sequence, read N- to C-terminus: Lysis protein for colicin N (52 aa).

The first 17 residues, 1–17 (MCGKILLILFFIMTLSA), serve as a signal peptide directing secretion. Cys18 is lipidated: N-palmitoyl cysteine. Cys18 carries the S-diacylglycerol cysteine lipid modification.

The protein resides in the cell outer membrane. In terms of biological role, lysis proteins are required for both colicin release and partial cell lysis. The polypeptide is Lysis protein for colicin N (cnl) (Escherichia coli).